The chain runs to 207 residues: Guanylate kinase (207 aa).

The Guanylate kinase-like domain maps to 6-185 (GLLIVLSGPS…AKNRIQCIVE (180 aa)). 13–20 (GPSGVGKG) contributes to the ATP binding site.

It belongs to the guanylate kinase family.

It is found in the cytoplasm. It catalyses the reaction GMP + ATP = GDP + ADP. In terms of biological role, essential for recycling GMP and indirectly, cGMP. This chain is Guanylate kinase, found in Staphylococcus aureus (strain bovine RF122 / ET3-1).